The primary structure comprises 177 residues: ATP synthase subunit delta (177 aa).

It belongs to the ATPase delta chain family. In terms of assembly, F-type ATPases have 2 components, F(1) - the catalytic core - and F(0) - the membrane proton channel. F(1) has five subunits: alpha(3), beta(3), gamma(1), delta(1), epsilon(1). F(0) has three main subunits: a(1), b(2) and c(10-14). The alpha and beta chains form an alternating ring which encloses part of the gamma chain. F(1) is attached to F(0) by a central stalk formed by the gamma and epsilon chains, while a peripheral stalk is formed by the delta and b chains.

Its subcellular location is the cell inner membrane. Its function is as follows. F(1)F(0) ATP synthase produces ATP from ADP in the presence of a proton or sodium gradient. F-type ATPases consist of two structural domains, F(1) containing the extramembraneous catalytic core and F(0) containing the membrane proton channel, linked together by a central stalk and a peripheral stalk. During catalysis, ATP synthesis in the catalytic domain of F(1) is coupled via a rotary mechanism of the central stalk subunits to proton translocation. This protein is part of the stalk that links CF(0) to CF(1). It either transmits conformational changes from CF(0) to CF(1) or is implicated in proton conduction. This is ATP synthase subunit delta from Shewanella oneidensis (strain ATCC 700550 / JCM 31522 / CIP 106686 / LMG 19005 / NCIMB 14063 / MR-1).